Consider the following 63-residue polypeptide: Hirudin-P6 (63 aa).

The interaction with thrombin active site stretch occupies residues 1 to 3 (MRY). 3 disulfide bridges follow: C6/C14, C16/C28, and C22/C37. The span at 35-55 (KKCVEGEGTRKPQNEGQHDFD) shows a compositional bias: basic and acidic residues. The tract at residues 35 to 63 (KKCVEGEGTRKPQNEGQHDFDPIPEEYLS) is disordered. T43 is a glycosylation site (O-linked (GalNAc...) threonine). Positions 53–63 (DFDPIPEEYLS) are interaction with fibrinogen-binding exosite of thrombin. A Sulfotyrosine modification is found at Y61.

The protein belongs to the protease inhibitor I14 (hirudin) family. In terms of processing, O-linked glycan consists of Fuc-Gal-GalNAc trisaccharide.

The protein resides in the secreted. Its function is as follows. Hirudin is a potent thrombin-specific protease inhibitor. It forms a stable non-covalent complex with alpha-thrombin, thereby abolishing its ability to cleave fibrinogen. The polypeptide is Hirudin-P6 (Hirudinaria manillensis (Asian medical leech)).